The primary structure comprises 138 residues: Small ribosomal subunit protein uS11c (138 aa).

It belongs to the universal ribosomal protein uS11 family. In terms of assembly, part of the 30S ribosomal subunit.

The protein resides in the plastid. Its subcellular location is the chloroplast. This chain is Small ribosomal subunit protein uS11c, found in Phaseolus vulgaris (Kidney bean).